The chain runs to 177 residues: Ubiquinol-cytochrome c reductase iron-sulfur subunit (177 aa).

The helical transmembrane segment at 18 to 38 (IVLTASSVAAVGAACAFWPII) threads the bilayer. Residues 88–175 (ARAVKMSELI…YIFISDTKIR (88 aa)) enclose the Rieske domain. Residues Cys-120, His-122, Cys-139, and His-142 each coordinate [2Fe-2S] cluster. The cysteines at positions 125 and 141 are disulfide-linked.

Belongs to the Rieske iron-sulfur protein family. As to quaternary structure, the main subunits of complex b-c1 are: cytochrome b, cytochrome c1 and the Rieske protein. It depends on [2Fe-2S] cluster as a cofactor.

Its subcellular location is the cell membrane. It carries out the reaction a quinol + 2 Fe(III)-[cytochrome c](out) = a quinone + 2 Fe(II)-[cytochrome c](out) + 2 H(+)(out). Its function is as follows. Component of the ubiquinol-cytochrome c reductase complex (complex III or cytochrome b-c1 complex), which is a respiratory chain that generates an electrochemical potential coupled to ATP synthesis. This is Ubiquinol-cytochrome c reductase iron-sulfur subunit (petA) from Rickettsia typhi (strain ATCC VR-144 / Wilmington).